The chain runs to 137 residues: uncharacterized protein (137 aa).

Positions 1-32 are disordered; sequence MRDHLPPGLPPDPFADDPCDPSAALDAVEPGQ.

To M.tuberculosis Rv3412.

This is an uncharacterized protein from Mycobacterium leprae (strain TN).